The chain runs to 128 residues: Gene 39 protein (128 aa).

This chain is Gene 39 protein (39), found in Mycobacterium (Mycobacteriophage D29).